The following is a 174-amino-acid chain: Large ribosomal subunit protein uL10 (174 aa).

The protein belongs to the universal ribosomal protein uL10 family. Part of the ribosomal stalk of the 50S ribosomal subunit. The N-terminus interacts with L11 and the large rRNA to form the base of the stalk. The C-terminus forms an elongated spine to which L12 dimers bind in a sequential fashion forming a multimeric L10(L12)X complex.

Its function is as follows. Forms part of the ribosomal stalk, playing a central role in the interaction of the ribosome with GTP-bound translation factors. This is Large ribosomal subunit protein uL10 from Vesicomyosocius okutanii subsp. Calyptogena okutanii (strain HA).